We begin with the raw amino-acid sequence, 167 residues long: SsrA-binding protein (167 aa).

Belongs to the SmpB family.

The protein resides in the cytoplasm. In terms of biological role, required for rescue of stalled ribosomes mediated by trans-translation. Binds to transfer-messenger RNA (tmRNA), required for stable association of tmRNA with ribosomes. tmRNA and SmpB together mimic tRNA shape, replacing the anticodon stem-loop with SmpB. tmRNA is encoded by the ssrA gene; the 2 termini fold to resemble tRNA(Ala) and it encodes a 'tag peptide', a short internal open reading frame. During trans-translation Ala-aminoacylated tmRNA acts like a tRNA, entering the A-site of stalled ribosomes, displacing the stalled mRNA. The ribosome then switches to translate the ORF on the tmRNA; the nascent peptide is terminated with the 'tag peptide' encoded by the tmRNA and targeted for degradation. The ribosome is freed to recommence translation, which seems to be the essential function of trans-translation. The polypeptide is SsrA-binding protein (Stenotrophomonas maltophilia (strain R551-3)).